The chain runs to 356 residues: Viral cathepsin (356 aa).

The N-terminal stretch at 1 to 40 (MYANALVCLNPSFIKLQFHIVCTMNIIGIVTLALCSAASA) is a signal peptide. Positions 41–144 (ADEGAAYNLQ…IILNQPPDKG (104 aa)) are cleaved as a propeptide — activation peptide. 3 disulfides stabilise this stretch: C165/C206, C199/C239, and C295/C343. Residue C168 is part of the active site. Catalysis depends on residues H302 and N322.

The protein belongs to the peptidase C1 family. Synthesized as an inactive proenzyme and activated by proteolytic removal of the inhibitory propeptide.

It catalyses the reaction Endopeptidase of broad specificity, hydrolyzing substrates of both cathepsin L and cathepsin B.. Cysteine protease that plays an essential role in host liquefaction to facilitate horizontal transmission of the virus. May participate in the degradation of foreign protein expressed by the baculovirus system. The protein is Viral cathepsin (VCATH) of Lepidoptera (butterflies and moths).